The primary structure comprises 249 residues: Isoprenyl transferase (249 aa).

Residue aspartate 25 is part of the active site. Residue aspartate 25 coordinates Mg(2+). Residues 26 to 29, tryptophan 30, arginine 38, histidine 42, and 70 to 72 each bind substrate; these read GNGR and STE. Asparagine 73 serves as the catalytic Proton acceptor. Substrate is bound by residues tryptophan 74, arginine 76, arginine 197, and 203-205; that span reads RLS. Glutamate 216 is a Mg(2+) binding site.

The protein belongs to the UPP synthase family. Homodimer. Mg(2+) is required as a cofactor.

Functionally, catalyzes the condensation of isopentenyl diphosphate (IPP) with allylic pyrophosphates generating different type of terpenoids. The protein is Isoprenyl transferase of Streptococcus pyogenes serotype M6 (strain ATCC BAA-946 / MGAS10394).